The primary structure comprises 571 residues: RNA polymerase sigma factor SigA (571 aa).

The tract at residues 321–391 (MVESNLRLVI…TRAIADQART (71 aa)) is sigma-70 factor domain-2. The Interaction with polymerase core subunit RpoC signature appears at 345 to 348 (DLIQ). The sigma-70 factor domain-3 stretch occupies residues 400 to 476 (ETINKVLRGA…DTAVESPAEA (77 aa)). The sigma-70 factor domain-4 stretch occupies residues 489 to 542 (VLKTLTDRERFVLIHRFGLLDGRPKTLEEVGSAFNVTRERIRQIEAKALRKMRH). Positions 515–534 (LEEVGSAFNVTRERIRQIEA) form a DNA-binding region, H-T-H motif.

It belongs to the sigma-70 factor family. RpoD/SigA subfamily. As to quaternary structure, interacts transiently with the RNA polymerase catalytic core.

Its subcellular location is the cytoplasm. Sigma factors are initiation factors that promote the attachment of RNA polymerase to specific initiation sites and are then released. This sigma factor is the primary sigma factor during exponential growth. The sequence is that of RNA polymerase sigma factor SigA from Chlamydia trachomatis serovar D (strain ATCC VR-885 / DSM 19411 / UW-3/Cx).